The following is a 2155-amino-acid chain: Alpha-tectorin (2155 aa).

Positions 1–22 (MNYSSFLRIWVSFIFALVQHQA) are cleaved as a signal peptide. Asn-34, Asn-187, Asn-215, Asn-278, Asn-455, Asn-506, Asn-528, and Asn-560 each carry an N-linked (GlcNAc...) asparagine glycan. In terms of domain architecture, NIDO spans 98–252 (PFWADVHNGI…GRWAFKVDGK (155 aa)). One can recognise a VWFC domain in the interval 260–314 (CTSRGQFLRRGEVFWDDLNCTVKCRCLDFNNEIYCQEASCSPYEVCEPKGKFFYC). Positions 320–500 (STCVVFGEPH…RVYHADWKCD (181 aa)) constitute a VWFD 1 domain. 2 disulfide bridges follow: Cys-322–Cys-461 and Cys-344–Cys-499. In terms of domain architecture, TIL 1 spans 597 to 650 (CPSFSHYSVCTSSCPDTCSDLTASRNCATPCTEGCECNQGFVLSTSQCVPLHKC). N-linked (GlcNAc...) asparagine glycosylation is found at Asn-670, Asn-687, Asn-813, Asn-843, Asn-855, Asn-898, Asn-920, Asn-931, and Asn-949. The 176-residue stretch at 711 to 886 (TVCLLSQNQV…SWTTFEEICN (176 aa)) folds into the VWFD 2 domain. A disulfide bridge links Cys-713 with Cys-849. Positions 984–1036 (CPENSHFEECITCTETCETLTLGPICVDSCSEGCQCDEGYALLGSQCVTRSEC) constitute a TIL 2 domain. N-linked (GlcNAc...) asparagine glycans are attached at residues Asn-1048, Asn-1235, and Asn-1364. The VWFD 3 domain maps to 1098-1278 (ASCIVSGYGH…SWVKRDTFCQ (181 aa)). Intrachain disulfides connect Cys-1100–Cys-1241 and Cys-1122–Cys-1277. A TIL 3 domain is found at 1372 to 1425 (CPPNSHYESCVSVCQPRCAAIRLKSDCSHYCVEGCHCDAGYVLNGKSCILPHSC). Positions 1485-1666 (SYCLAAGGGV…QKRPLAPSCN (182 aa)) constitute a VWFD 4 domain. 7 cysteine pairs are disulfide-bonded: Cys-1487–Cys-1622, Cys-1509–Cys-1665, Cys-1717–Cys-1775, Cys-1741–Cys-1784, Cys-1786–Cys-1818, Cys-1806–Cys-1898, and Cys-1837–Cys-1857. 10 N-linked (GlcNAc...) asparagine glycosylation sites follow: Asn-1538, Asn-1565, Asn-1756, Asn-1772, Asn-1794, Asn-1851, Asn-1864, Asn-1880, Asn-1920, and Asn-1939. Residues 1805 to 2059 (TCKAAQMEVS…YSCKITCPHN (255 aa)) form the ZP domain. Disulfide bonds link Cys-1980–Cys-2040, Cys-2001–Cys-2056, and Cys-2045–Cys-2052. Asn-2091 is lipidated: GPI-anchor amidated asparagine. A propeptide spans 2092 to 2155 (GGCEQICTSR…HFVYKSGTTS (64 aa)) (removed in mature form).

As to quaternary structure, may form homomeric filament after self-association or heteromeric filament after association with beta-tectorin. Interacts with CEACAM16. The presence of a hydrophobic C-terminus preceded by a potential cleavage site strongly suggests that tectorins are synthesized as glycosylphosphatidylinositol-linked, membrane-bound precursors. Tectorins are targeted to the apical surface of the inner ear epithelia by the lipid and proteolytically released into the extracellular compartment.

The protein resides in the cell membrane. Its subcellular location is the secreted. The protein localises to the extracellular space. It localises to the extracellular matrix. One of the major non-collagenous components of the tectorial membrane. The tectorial membrane is an extracellular matrix of the inner ear that covers the neuroepithelium of the cochlea and contacts the stereocilia bundles of specialized sensory hair cells. Sound induces movement of these hair cells relative to the tectorial membrane, deflects the stereocilia and leads to fluctuations in hair-cell membrane potential, transducing sound into electrical signals. The polypeptide is Alpha-tectorin (TECTA) (Homo sapiens (Human)).